Here is a 757-residue protein sequence, read N- to C-terminus: RNA exonuclease 3 (757 aa).

Disordered regions lie at residues V56 to L259 and E474 to A590. Residues E120–F132 show a composition bias toward basic and acidic residues. Composition is skewed to polar residues over residues T145 to S172, Q202 to K223, and M230 to R240. 2 stretches are compositionally biased toward low complexity: residues R244–S253 and E474–S502. A compositionally biased stretch (polar residues) spans R503–L516. Basic and acidic residues-rich tracts occupy residues R543–G557 and S565–E581. The Exonuclease domain occupies V597–V751.

Belongs to the REXO1/REXO3 family.

The protein localises to the cytoplasm. The protein resides in the nucleus. Functionally, 3' to 5' exoribonuclease required for proper 3' end maturation of MRP RNA and of the U5L snRNA. This chain is RNA exonuclease 3 (REX3), found in Yarrowia lipolytica (strain CLIB 122 / E 150) (Yeast).